Here is a 488-residue protein sequence, read N- to C-terminus: 3-octaprenyl-4-hydroxybenzoate carboxy-lyase (488 aa).

Asn-172 contributes to the Mn(2+) binding site. Residues 175-177 (IYR), 189-191 (RWL), and 194-195 (RG) each bind prenylated FMN. Residue Glu-238 coordinates Mn(2+). Asp-287 (proton donor) is an active-site residue.

It belongs to the UbiD family. In terms of assembly, homohexamer. It depends on prenylated FMN as a cofactor. The cofactor is Mn(2+).

It localises to the cell membrane. It catalyses the reaction a 4-hydroxy-3-(all-trans-polyprenyl)benzoate + H(+) = a 2-(all-trans-polyprenyl)phenol + CO2. Its pathway is cofactor biosynthesis; ubiquinone biosynthesis. Functionally, catalyzes the decarboxylation of 3-octaprenyl-4-hydroxy benzoate to 2-octaprenylphenol, an intermediate step in ubiquinone biosynthesis. This chain is 3-octaprenyl-4-hydroxybenzoate carboxy-lyase, found in Alteromonas mediterranea (strain DSM 17117 / CIP 110805 / LMG 28347 / Deep ecotype).